We begin with the raw amino-acid sequence, 403 residues long: S-adenosylmethionine sensor upstream of mTORC1 (403 aa).

Gly residues predominate over residues 1–10 (MEPGPGGRGA). The segment at 1 to 32 (MEPGPGGRGAARGQRPPNAAQPREQERKLEQE) is disordered. A compositionally biased stretch (low complexity) spans 11-22 (ARGQRPPNAAQP). Over residues 23–32 (REQERKLEQE) the composition is skewed to basic and acidic residues. Positions 93, 170, 188, 200, 201, and 242 each coordinate S-adenosyl-L-methionine.

It belongs to the BMT2/SAMTOR family. In terms of assembly, interacts with the GATOR1 complex; interaction is disrupted when SAMTOR binds S-adenosyl-L-methionine. Interacts with the KICSTOR complex; interaction is disrupted when SAMTOR binds S-adenosyl-L-methionine.

Its function is as follows. S-adenosyl-L-methionine-binding protein that acts as an inhibitor of mTORC1 signaling via interaction with the GATOR1 and KICSTOR complexes. Acts as a sensor of S-adenosyl-L-methionine to signal methionine sufficiency to mTORC1: in presence of methionine, binds S-adenosyl-L-methionine, leading to disrupt interaction with the GATOR1 and KICSTOR complexes and promote mTORC1 signaling. Upon methionine starvation, S-adenosyl-L-methionine levels are reduced, thereby promoting the association with GATOR1 and KICSTOR, leading to inhibit mTORC1 signaling. Probably also acts as a S-adenosyl-L-methionine-dependent methyltransferase. The sequence is that of S-adenosylmethionine sensor upstream of mTORC1 from Mus musculus (Mouse).